Reading from the N-terminus, the 213-residue chain is Imidazole glycerol phosphate synthase subunit HisH 2 (213 aa).

The Glutamine amidotransferase type-1 domain maps to arginine 4 to proline 211. Cysteine 82 serves as the catalytic Nucleophile. Active-site residues include histidine 186 and glutamate 188.

As to quaternary structure, heterodimer of HisH and HisF.

The protein resides in the cytoplasm. It catalyses the reaction 5-[(5-phospho-1-deoxy-D-ribulos-1-ylimino)methylamino]-1-(5-phospho-beta-D-ribosyl)imidazole-4-carboxamide + L-glutamine = D-erythro-1-(imidazol-4-yl)glycerol 3-phosphate + 5-amino-1-(5-phospho-beta-D-ribosyl)imidazole-4-carboxamide + L-glutamate + H(+). The catalysed reaction is L-glutamine + H2O = L-glutamate + NH4(+). Its pathway is amino-acid biosynthesis; L-histidine biosynthesis; L-histidine from 5-phospho-alpha-D-ribose 1-diphosphate: step 5/9. In terms of biological role, IGPS catalyzes the conversion of PRFAR and glutamine to IGP, AICAR and glutamate. The HisH subunit provides the glutamine amidotransferase activity that produces the ammonia necessary to HisF for the synthesis of IGP and AICAR. This is Imidazole glycerol phosphate synthase subunit HisH 2 (hisH2) from Prochlorococcus marinus (strain MIT 9313).